The chain runs to 288 residues: 4-diphosphocytidyl-2-C-methyl-D-erythritol kinase (288 aa).

Lys-13 is an active-site residue. 96 to 106 is a binding site for ATP; it reads PMGGGIGGGSS. Residue Asp-138 is part of the active site.

The protein belongs to the GHMP kinase family. IspE subfamily.

The enzyme catalyses 4-CDP-2-C-methyl-D-erythritol + ATP = 4-CDP-2-C-methyl-D-erythritol 2-phosphate + ADP + H(+). The protein operates within isoprenoid biosynthesis; isopentenyl diphosphate biosynthesis via DXP pathway; isopentenyl diphosphate from 1-deoxy-D-xylulose 5-phosphate: step 3/6. In terms of biological role, catalyzes the phosphorylation of the position 2 hydroxy group of 4-diphosphocytidyl-2C-methyl-D-erythritol. This chain is 4-diphosphocytidyl-2-C-methyl-D-erythritol kinase, found in Aliivibrio fischeri (strain ATCC 700601 / ES114) (Vibrio fischeri).